Consider the following 299-residue polypeptide: Putative peptidyl-prolyl cis-trans isomerase jhp_0161 (299 aa).

An N-terminal signal peptide occupies residues 1 to 21; the sequence is MKKNILNLALVGALSASFLMA. In terms of domain architecture, PpiC spans 154 to 253; it reads KQEAHARHIL…FGYHIIYLIS (100 aa).

It carries out the reaction [protein]-peptidylproline (omega=180) = [protein]-peptidylproline (omega=0). This chain is Putative peptidyl-prolyl cis-trans isomerase jhp_0161, found in Helicobacter pylori (strain J99 / ATCC 700824) (Campylobacter pylori J99).